The primary structure comprises 512 residues: Envelope glycoprotein (512 aa).

Residues 1–15 (MFLQTALLLLSLGVA) form the signal peptide. 5 N-linked (GlcNAc...) asparagine; by host glycosylation sites follow: N185, N263, N289, N378, and N416. Residues 479-502 (GQLGGLLYGNIGVYLLIAFAFVLL) traverse the membrane as a helical segment.

It localises to the virion membrane. Functionally, attaches the virus to host cellular receptor and later induces fusion of virion with host membrane. The polypeptide is Envelope glycoprotein (Thogoto virus (isolate SiAr 126) (Tho)).